A 195-amino-acid chain; its full sequence is Fe/S biogenesis protein NfuA (195 aa).

[4Fe-4S] cluster contacts are provided by Cys-152 and Cys-155.

It belongs to the NfuA family. Homodimer. The cofactor is [4Fe-4S] cluster.

Functionally, involved in iron-sulfur cluster biogenesis. Binds a 4Fe-4S cluster, can transfer this cluster to apoproteins, and thereby intervenes in the maturation of Fe/S proteins. Could also act as a scaffold/chaperone for damaged Fe/S proteins. The protein is Fe/S biogenesis protein NfuA of Vibrio cholerae serotype O1 (strain ATCC 39315 / El Tor Inaba N16961).